The sequence spans 74 residues: Brevinin-2MT1 (74 aa).

Positions 1 to 22 are cleaved as a signal peptide; the sequence is MFTMKKSLLVLFFLGTISLSLC. Residues 23-39 constitute a propeptide, removed in mature form; sequence EEERNADEDDGEMTEEE. An intrachain disulfide couples Cys68 to Cys74.

It belongs to the frog skin active peptide (FSAP) family. Brevinin subfamily. As to expression, expressed by the skin glands.

The protein resides in the secreted. Its function is as follows. Antimicrobial peptide. Active against a variety of Gram-negative and Gram-positive bacterial strains. Active against fungi. Shows hemolytic activity against human erythrocytes. In Amolops mantzorum (Sichuan torrent frog), this protein is Brevinin-2MT1.